We begin with the raw amino-acid sequence, 497 residues long: Trichoplein keratin filament-binding protein (497 aa).

3 coiled-coil regions span residues 67–140 (HCEK…LLYE), 166–271 (ATQK…ELGR), and 327–479 (MKQV…AKTM). The tract at residues 72-457 (KEEKRKILEL…WEAARQEEEE (386 aa)) is interaction with keratin proteins. The tract at residues 167–188 (TQKEEKKQQEATEKQENKRLEN) is disordered. Residues 168–188 (QKEEKKQQEATEKQENKRLEN) are compositionally biased toward basic and acidic residues. Residues 258 to 424 (RQMAALRRKT…KQLAQRAKEE (167 aa)) are trichohyalin/plectin homology domain. The tract at residues 441 to 497 (AERQGQEWEAARQEEEEEEEARQAEEHSNALLQQEAKTMAEKGYQPKLHGHLRIAWD) is disordered. The segment covering 444 to 453 (QGQEWEAARQ) has biased composition (basic and acidic residues). Residues 488-497 (LHGHLRIAWD) show a composition bias toward basic residues.

It belongs to the TCHP family. In terms of assembly, interacts specifically with keratin proteins including, KRT5, KRT6A, KRT8, KRT14, KRT16 and KRT18. Interacts with KCTD17. Post-translationally, ubiquitinated. Ubiquitination by the BCR(KCTD17) E3 ubiquitin ligase complex results in proteasomal degradation, and induces ciliogenesis. In terms of tissue distribution, expressed in all tissues examined, including brain, liver, small intestine, large intestine, lung and heart. Found concentrated in tubular structures within hepatocytes, and in the apical cortical region and desmosomes of the apical junctional domain in enterocytes of the small intestine. In the hair follicle, localized at the outer root sheath. Also expressed in blood vessels (at protein level).

Its subcellular location is the cytoplasm. The protein resides in the cytoskeleton. It is found in the cell membrane. It localises to the mitochondrion. The protein localises to the microtubule organizing center. Its subcellular location is the centrosome. Its function is as follows. Tumor suppressor which has the ability to inhibit cell growth and be pro-apoptotic during cell stress. May act as a 'capping' or 'branching' protein for keratin filaments in the cell periphery. May regulate K8/K18 filament and desmosome organization mainly at the apical or peripheral regions of simple epithelial cells. Is a negative regulator of ciliogenesis. The protein is Trichoplein keratin filament-binding protein of Mus musculus (Mouse).